Here is a 359-residue protein sequence, read N- to C-terminus: Bergaptol O-methyltransferase (359 aa).

Bergaptol is bound at residue His-126. Positions 179, 203, 226, 246, and 260 each coordinate S-adenosyl-L-homocysteine. A bergaptol-binding site is contributed by His-264. His-264 serves as the catalytic Proton acceptor.

It belongs to the class I-like SAM-binding methyltransferase superfamily. Cation-independent O-methyltransferase family. COMT subfamily. Homodimer. As to expression, mostly expressed in roots and, to a lower extent, in stems and leaves.

The protein resides in the cytoplasm. It carries out the reaction bergaptol + S-adenosyl-L-methionine = bergapten + S-adenosyl-L-homocysteine. It participates in aromatic compound metabolism. The protein operates within secondary metabolite biosynthesis. O-methyltransferase involved in the biosynthesis of furocoumarins natural products such as bergapten, a photosensitizer used for medical purpose such as treating psoriasis and vitiligo or facilitating resistance to microbial infection and other stresses. Catalyzes specifically the methylation of bergaptol. Not active on xanthotol, isoscopoletin, scopoletin and esculetin. This Kitagawia praeruptora (Peucedanum praeruptorum) protein is Bergaptol O-methyltransferase.